Consider the following 490-residue polypeptide: Betaine aldehyde dehydrogenase (490 aa).

Asp93 is a K(+) binding site. 150–152 contributes to the NAD(+) binding site; sequence GAW. The active-site Charge relay system is the Lys162. 176 to 179 provides a ligand contact to NAD(+); it reads KPSE. K(+) is bound at residue Val180. 230 to 233 provides a ligand contact to NAD(+); the sequence is GVKT. Leu246 serves as a coordination point for K(+). Glu252 serves as the catalytic Proton acceptor. The NAD(+) site is built by Gly254, Cys286, and Glu387. Cys286 functions as the Nucleophile in the catalytic mechanism. Residue Cys286 is modified to Cysteine sulfenic acid (-SOH). Positions 457 and 460 each coordinate K(+). Glu464 serves as the catalytic Charge relay system.

The protein belongs to the aldehyde dehydrogenase family. In terms of assembly, dimer of dimers. It depends on K(+) as a cofactor.

It catalyses the reaction betaine aldehyde + NAD(+) + H2O = glycine betaine + NADH + 2 H(+). It participates in amine and polyamine biosynthesis; betaine biosynthesis via choline pathway; betaine from betaine aldehyde: step 1/1. Its function is as follows. Involved in the biosynthesis of the osmoprotectant glycine betaine. Catalyzes the irreversible oxidation of betaine aldehyde to the corresponding acid. This Serratia proteamaculans (strain 568) protein is Betaine aldehyde dehydrogenase.